The primary structure comprises 575 residues: Delta-selinene-like synthase, chloroplastic (575 aa).

The (2E,6E)-farnesyl diphosphate site is built by Arg-288, Asp-325, Asp-329, Arg-466, and Asp-469. Mg(2+) is bound by residues Asp-325 and Asp-329. A DDXXD motif motif is present at residues 325–329 (DDLYD). The Mg(2+) site is built by Asp-469 and Glu-477.

Belongs to the terpene synthase family. Tpsb subfamily. As to quaternary structure, monomer. The cofactor is Mg(2+). Mn(2+) serves as cofactor.

The protein localises to the plastid. The protein resides in the chloroplast. It catalyses the reaction (2E,6E)-farnesyl diphosphate = (+)-delta-selinene + diphosphate. It participates in secondary metabolite biosynthesis; terpenoid biosynthesis. Its pathway is terpene metabolism; oleoresin biosynthesis. Its function is as follows. Sesquiterpene synthase (sesqui-TPS) involved in the biosynthesis of sesquiterpene natural products. Catalyzes the conversion of (2E)-geranyl diphosphate (GPP) into delta-selinene. This chain is Delta-selinene-like synthase, chloroplastic, found in Picea sitchensis (Sitka spruce).